We begin with the raw amino-acid sequence, 237 residues long: Eukaryotic translation initiation factor 3 subunit J (237 aa).

Residues 20–64 (ANNINKWEGEDDDEDVKESWEDEEEKKDEEKPTKTEAPAKTKPNK) form a disordered region. The segment covering 28–46 (GEDDDEDVKESWEDEEEKK) has biased composition (acidic residues). The segment covering 47–58 (DEEKPTKTEAPA) has biased composition (basic and acidic residues). The stretch at 63–115 (NKVLKAKLLEQECLEKEEEAKRLANMSTEEKLAEKLRLQKIQEESDLKSALET) forms a coiled coil.

The protein belongs to the eIF-3 subunit J family. In terms of assembly, component of the eukaryotic translation initiation factor 3 (eIF-3) complex. The eIF-3 complex interacts with pix.

It is found in the cytoplasm. In terms of biological role, component of the eukaryotic translation initiation factor 3 (eIF-3) complex, which is involved in protein synthesis of a specialized repertoire of mRNAs and, together with other initiation factors, stimulates binding of mRNA and methionyl-tRNAi to the 40S ribosome. The eIF-3 complex specifically targets and initiates translation of a subset of mRNAs involved in cell proliferation. This chain is Eukaryotic translation initiation factor 3 subunit J, found in Drosophila grimshawi (Hawaiian fruit fly).